We begin with the raw amino-acid sequence, 387 residues long: Phosphoglycerate kinase (387 aa).

Substrate contacts are provided by residues 21-23, R36, 59-62, R113, and R146; these read DLN and HLGR. ATP-binding positions include K197, E314, and 340 to 343; that span reads GGDT.

It belongs to the phosphoglycerate kinase family. As to quaternary structure, monomer.

The protein resides in the cytoplasm. It catalyses the reaction (2R)-3-phosphoglycerate + ATP = (2R)-3-phospho-glyceroyl phosphate + ADP. It participates in carbohydrate degradation; glycolysis; pyruvate from D-glyceraldehyde 3-phosphate: step 2/5. The sequence is that of Phosphoglycerate kinase from Pseudomonas fluorescens (strain ATCC BAA-477 / NRRL B-23932 / Pf-5).